The sequence spans 276 residues: Putative pyridoxine kinase (276 aa).

Asn139 contributes to the ATP binding site. Glu142 lines the Mg(2+) pocket. Residues 176-180 (KGGKA), Asp188, Gly213, and Lys238 contribute to the ATP site.

The protein belongs to the ThiD family.

The catalysed reaction is pyridoxal + ATP = pyridoxal 5'-phosphate + ADP + H(+). In terms of biological role, phosphorylates B6 vitamers; functions in a salvage pathway. Uses pyridoxal, pyridoxine, and pyridoxamine as substrates. This is Putative pyridoxine kinase (pdxK) from Staphylococcus epidermidis (strain ATCC 35984 / DSM 28319 / BCRC 17069 / CCUG 31568 / BM 3577 / RP62A).